The following is a 538-amino-acid chain: Bifunctional purine biosynthesis protein PurH (538 aa).

The MGS-like domain maps to 6–158 (KHIPAPDLHR…KNHAYVATVV (153 aa)).

It belongs to the PurH family.

It carries out the reaction (6R)-10-formyltetrahydrofolate + 5-amino-1-(5-phospho-beta-D-ribosyl)imidazole-4-carboxamide = 5-formamido-1-(5-phospho-D-ribosyl)imidazole-4-carboxamide + (6S)-5,6,7,8-tetrahydrofolate. It catalyses the reaction IMP + H2O = 5-formamido-1-(5-phospho-D-ribosyl)imidazole-4-carboxamide. The protein operates within purine metabolism; IMP biosynthesis via de novo pathway; 5-formamido-1-(5-phospho-D-ribosyl)imidazole-4-carboxamide from 5-amino-1-(5-phospho-D-ribosyl)imidazole-4-carboxamide (10-formyl THF route): step 1/1. It participates in purine metabolism; IMP biosynthesis via de novo pathway; IMP from 5-formamido-1-(5-phospho-D-ribosyl)imidazole-4-carboxamide: step 1/1. The protein is Bifunctional purine biosynthesis protein PurH of Brucella ovis (strain ATCC 25840 / 63/290 / NCTC 10512).